A 715-amino-acid chain; its full sequence is Putative macrophage stimulating 1-like protein (715 aa).

Residues 1-20 (MAPAPVTLLAPGAASSMSCS) form the signal peptide. Positions 21–110 (QPGQRSPSND…GRCDLFQEKG (90 aa)) constitute a PAN domain. 4 consecutive Kringle domains span residues 63-156 (GRCG…IKSC), 160-238 (ACVW…LPRC), 252-345 (SCFR…IRRC), and 353-464 (DCYH…LRRC). 12 disulfide bridges follow: Cys127–Cys151, Cys161–Cys238, Cys182–Cys221, Cys210–Cys233, Cys253–Cys345, Cys316–Cys339, Cys354–Cys464, Cys375–Cys447, Cys511–Cys527, Cys606–Cys671, Cys636–Cys650, and Cys661–Cys689. The region spanning 488–713 (VAGGHPGNSP…FVDWIHKVMR (226 aa)) is the Peptidase S1 domain.

Belongs to the peptidase S1 family. Plasminogen subfamily.

The protein localises to the secreted. This Homo sapiens (Human) protein is Putative macrophage stimulating 1-like protein (MST1L).